Here is a 222-residue protein sequence, read N- to C-terminus: Large ribosomal subunit protein mL64 (222 aa).

Disordered regions lie at residues Leu14–Pro40 and Lys188–Ser222. Residues Glu144–Asp213 adopt a coiled-coil conformation. The Nuclear localization signal signature appears at Lys184–Glu200. The span at Lys188–Ala201 shows a compositional bias: basic and acidic residues. Residues Arg202–Ala216 show a composition bias toward low complexity.

This sequence belongs to the mitochondrion-specific ribosomal protein mL64 family. In terms of assembly, component of the mitochondrial ribosome large subunit (39S) which comprises a 16S rRNA and about 50 distinct proteins. Interacts with GADD45A, GADD45B and GADD45G. Interacts with NR4A1 via the NR4A1 AB domain. Interacts with ATAD3A and ATAD3B.

It localises to the mitochondrion. Its subcellular location is the nucleus. Acts as a negative regulator of G1 to S cell cycle phase progression by inhibiting cyclin-dependent kinases. Inhibitory effects are additive with GADD45 proteins but also occur in the absence of GADD45 proteins. Acts as a repressor of the orphan nuclear receptor NR4A1 by inhibiting AB domain-mediated transcriptional activity. May be involved in the hormone-mediated regulation of NR4A1 transcriptional activity. May play a role in mitochondrial protein synthesis. The polypeptide is Large ribosomal subunit protein mL64 (GADD45GIP1) (Chlorocebus aethiops (Green monkey)).